A 124-amino-acid chain; its full sequence is U-scoloptoxin-Er5d (124 aa).

Positions 1–22 (MKTNCEFPLLCLLIVLVANVEG) are cleaved as a signal peptide. The propeptide occupies 23–94 (EVEDNELKMV…KRLWRNWERR (72 aa)). 3 RLWRNWE repeats span residues 34 to 40 (RLWRNWE), 61 to 67 (RLWRNWE), and 86 to 92 (RLWRNWE). Gln95 carries the pyrrolidone carboxylic acid modification. An RLWRNWE 4; approximate repeat occupies 107 to 113 (ELWRNWE). Residues 112–124 (WEDLKRRQVGRFE) constitute a propeptide that is removed on maturation.

This sequence belongs to the scoloptoxin-08 family. In terms of tissue distribution, expressed by the venom gland.

The protein resides in the secreted. This is U-scoloptoxin-Er5d from Ethmostigmus rubripes (Giant centipede).